We begin with the raw amino-acid sequence, 90 residues long: Probable Fe(2+)-trafficking protein (90 aa).

Belongs to the Fe(2+)-trafficking protein family.

Could be a mediator in iron transactions between iron acquisition and iron-requiring processes, such as synthesis and/or repair of Fe-S clusters in biosynthetic enzymes. The sequence is that of Probable Fe(2+)-trafficking protein from Laribacter hongkongensis (strain HLHK9).